The chain runs to 622 residues: Threonine--tRNA ligase (622 aa).

The tract at residues 1–136 is editing domain; it reads MKTLLIHSDY…PLSELSRKIT (136 aa). Residues 199-498 are catalytic; that stretch reads PHVKYIKEKE…TLENKPPALP (300 aa). Residues cysteine 291, histidine 343, and histidine 467 each contribute to the Zn(2+) site.

This sequence belongs to the class-II aminoacyl-tRNA synthetase family. In terms of assembly, homodimer. Requires Zn(2+) as cofactor.

Its subcellular location is the cytoplasm. It catalyses the reaction tRNA(Thr) + L-threonine + ATP = L-threonyl-tRNA(Thr) + AMP + diphosphate + H(+). Functionally, catalyzes the attachment of threonine to tRNA(Thr) in a two-step reaction: L-threonine is first activated by ATP to form Thr-AMP and then transferred to the acceptor end of tRNA(Thr). Also edits incorrectly charged L-seryl-tRNA(Thr). The chain is Threonine--tRNA ligase from Methanococcus maripaludis (strain DSM 14266 / JCM 13030 / NBRC 101832 / S2 / LL).